Reading from the N-terminus, the 806-residue chain is Sperm head and tail associated protein (806 aa).

4 disordered regions span residues 1–36 (MNSS…PSSC), 257–329 (TPAS…MSGS), 428–496 (LNNQ…CPQP), and 707–806 (SQIN…SKKK). A compositionally biased stretch (polar residues) spans 13–27 (APSTSPQADCPNNYS). The segment covering 277–290 (PPLSSASSPPSGNP) has biased composition (low complexity). Positions 320 to 329 (LSSQAGMSGS) are enriched in polar residues. Residues 521–806 (KEPPPETAVL…QIKSPHSKKK (286 aa)) are interaction with CRISP2. Low complexity-rich tracts occupy residues 710 to 723 (NHQN…KNSS) and 733 to 754 (RRGA…SSTQ). The span at 773 to 788 (QSQSPADGKIESQSKS) shows a compositional bias: polar residues.

In terms of assembly, interacts with CRISP2. As to expression, isoforms 3 and 4 are expressed in testis (at protein level).

Its subcellular location is the cytoplasm. Its function is as follows. Plays a role during spermatogenesis. The sequence is that of Sperm head and tail associated protein (Nsun4) from Mus musculus (Mouse).